The sequence spans 441 residues: Histidine--tRNA ligase (441 aa).

This sequence belongs to the class-II aminoacyl-tRNA synthetase family. In terms of assembly, homodimer.

It is found in the cytoplasm. The catalysed reaction is tRNA(His) + L-histidine + ATP = L-histidyl-tRNA(His) + AMP + diphosphate + H(+). The protein is Histidine--tRNA ligase of Koribacter versatilis (strain Ellin345).